We begin with the raw amino-acid sequence, 96 residues long: CLAVATA3/ESR (CLE)-related protein 43 (96 aa).

Residues 1–28 (MGCRDILLTFSVALLLISLFQIWLFREG) form the signal peptide. The interval 71-96 (FGLNNTNSRFEDSNRRIPSSPDRLHN) is disordered. N74 carries an N-linked (GlcNAc...) asparagine glycan. A hydroxyproline mark is found at P88 and P91. P91 carries an O-linked (Ara...) hydroxyproline glycan.

This sequence belongs to the CLV3/ESR signal peptide family. Post-translationally, the O-glycosylation (arabinosylation) of the hydroxyproline Pro-91 enhances binding affinity of the CLE43p peptide for its receptor. In terms of tissue distribution, expressed at low levels in seedlings.

The protein localises to the secreted. It is found in the extracellular space. Extracellular signal peptide that regulates cell fate. Promotes pollen tube growth prolongation in a SKM1 and SKM2-dependent manner, especially under relatively high temperature (at 30 degrees Celsius), thus conferring tolerance against high temperature probably through the maintenance of mitochondrial activity. The protein is CLAVATA3/ESR (CLE)-related protein 43 of Arabidopsis thaliana (Mouse-ear cress).